The primary structure comprises 259 residues: Imidazole glycerol phosphate synthase subunit HisF (259 aa).

Active-site residues include Asp11 and Asp130.

The protein belongs to the HisA/HisF family. As to quaternary structure, heterodimer of HisH and HisF.

It is found in the cytoplasm. The catalysed reaction is 5-[(5-phospho-1-deoxy-D-ribulos-1-ylimino)methylamino]-1-(5-phospho-beta-D-ribosyl)imidazole-4-carboxamide + L-glutamine = D-erythro-1-(imidazol-4-yl)glycerol 3-phosphate + 5-amino-1-(5-phospho-beta-D-ribosyl)imidazole-4-carboxamide + L-glutamate + H(+). It functions in the pathway amino-acid biosynthesis; L-histidine biosynthesis; L-histidine from 5-phospho-alpha-D-ribose 1-diphosphate: step 5/9. In terms of biological role, IGPS catalyzes the conversion of PRFAR and glutamine to IGP, AICAR and glutamate. The HisF subunit catalyzes the cyclization activity that produces IGP and AICAR from PRFAR using the ammonia provided by the HisH subunit. The chain is Imidazole glycerol phosphate synthase subunit HisF from Polaromonas naphthalenivorans (strain CJ2).